We begin with the raw amino-acid sequence, 318 residues long: Acetaldehyde dehydrogenase 1 (318 aa).

Position 15–18 (15–18) interacts with NAD(+); that stretch reads SGNI. Residue cysteine 133 is the Acyl-thioester intermediate of the active site. Residues 164–172 and asparagine 289 each bind NAD(+); that span reads SAGPGTRAN.

Belongs to the acetaldehyde dehydrogenase family.

The enzyme catalyses acetaldehyde + NAD(+) + CoA = acetyl-CoA + NADH + H(+). This is Acetaldehyde dehydrogenase 1 (xylQ) from Azotobacter vinelandii (strain DJ / ATCC BAA-1303).